A 210-amino-acid chain; its full sequence is Chaperone protein TorD (210 aa).

This sequence belongs to the TorD/DmsD family. TorD subfamily.

It localises to the cytoplasm. Involved in the biogenesis of TorA. Acts on TorA before the insertion of the molybdenum cofactor and, as a result, probably favors a conformation of the apoenzyme that is competent for acquiring the cofactor. This is Chaperone protein TorD from Salmonella paratyphi B (strain ATCC BAA-1250 / SPB7).